An 87-amino-acid polypeptide reads, in one-letter code: Precursor of CEP8 (87 aa).

Residues 1 to 29 (MAKALFFNFCISLLIIAILVSHEIIPTEA) form the signal peptide. A propeptide spanning residues 30–72 (RHLRTHRKSIKNSTLTVHEGAGGLRTGGGSVKTDISKEEHGVD) is cleaved from the precursor. Asparagine 41 is a glycosylation site (N-linked (GlcNAc...) asparagine). The tract at residues 41 to 87 (NSTLTVHEGAGGLRTGGGSVKTDISKEEHGVDEFRPTTPGNSPGIGH) is disordered. Over residues 49 to 59 (GAGGLRTGGGS) the composition is skewed to gly residues. The segment covering 63-75 (DISKEEHGVDEFR) has biased composition (basic and acidic residues). Proline 76, proline 79, and proline 83 each carry hydroxyproline.

The protein belongs to the C-terminally encoded plant signaling peptide (CEP) family. In terms of assembly, interacts with CEP receptors (e.g. CEPR1 and CEPR2). The mature small signaling peptide is generated by proteolytic processing of the longer precursor. As to expression, expressed in lateral root primordia and in lateral roots excluding the meristem region. Also present in the aerial tissues, such as leaf petioles and the shoot apex region.

It localises to the secreted. The protein localises to the extracellular space. The protein resides in the apoplast. Its function is as follows. Extracellular signaling peptide that may regulate primary root growth rate and systemic nitrogen (N)-demand signaling. Mediates up-regulation of genes involved in N uptake and assimilation pathways. This chain is Precursor of CEP8, found in Arabidopsis thaliana (Mouse-ear cress).